A 556-amino-acid polypeptide reads, in one-letter code: Zinc finger protein GLI1 (556 aa).

3 disordered regions span residues 57-83, 133-178, and 200-222; these read TEHPGGAADGSRFSTPRGAGKLGKKRA, SLGY…TPAR, and KYPEEKSEGDISSPASTGTQDPL. Over residues 135 to 148 the composition is skewed to low complexity; the sequence is GYQNPPGQQKGQGQ. C2H2-type zinc fingers lie at residues 247 to 272, 280 to 307, 313 to 337, 343 to 368, and 374 to 399; these read TNCYWDGCAKEFDTQEQLVHHINNEH, FVCHWAACSREQRPFKAQYMLVVHMRRH, HKCTFEGCNKAYSRLENLKTHLRSH, YVCEHEGCNKAFSNASDRAKHQNRTH, and YICKIPGCTKRYTDPSSLRKHVKTVH. The interval 295–303 is interaction with DNA; that stretch reads KAQYMLVVH. Interaction with DNA stretches follow at residues 357–362 and 387–393; these read ASDRAK and DPSSLRK. Residues 387–492 form a disordered region; sequence DPSSLRKHVK…VEMTGNTGGS (106 aa). Positions 454-472 are enriched in low complexity; sequence SKPQPSPGGQSSCSSDRSP.

This sequence belongs to the GLI C2H2-type zinc-finger protein family.

Its subcellular location is the cytoplasm. It is found in the nucleus. Acts as a transcriptional activator. Binds to the DNA consensus sequence 5'-GACCACCCA-3'. May regulate the transcription of specific genes during normal development. May play a role in craniofacial development and digital development, as well as development of the central nervous system and gastrointestinal tract. Mediates SHH signaling. Plays a role in cell proliferation and differentiation via its role in SHH signaling. The sequence is that of Zinc finger protein GLI1 (GLI1) from Gallus gallus (Chicken).